A 142-amino-acid chain; its full sequence is Neuritin (142 aa).

The signal sequence occupies residues 1 to 27 (MGLKLNGRYISLILAVQIAYLVQAVRA). Residue G116 is the site of GPI-anchor amidated glycine attachment. Residues 117–142 (AAGSLLPAFPVLLVSLSAALATWLSF) constitute a propeptide, removed in mature form.

This sequence belongs to the neuritin family. As to quaternary structure, component of the outer core of AMPAR complex. AMPAR complex consists of an inner core made of 4 pore-forming GluA/GRIA proteins (GRIA1, GRIA2, GRIA3 and GRIA4) and 4 major auxiliary subunits arranged in a twofold symmetry. One of the two pairs of distinct binding sites is occupied either by CNIH2, CNIH3 or CACNG2, CACNG3. The other harbors CACNG2, CACNG3, CACNG4, CACNG8 or GSG1L. This inner core of AMPAR complex is complemented by outer core constituents binding directly to the GluA/GRIA proteins at sites distinct from the interaction sites of the inner core constituents. Outer core constituents include at least PRRT1, PRRT2, CKAMP44/SHISA9, FRRS1L and NRN1. The proteins of the inner and outer core serve as a platform for other, more peripherally associated AMPAR constituents. Alone or in combination, these auxiliary subunits control the gating and pharmacology of the AMPAR complex and profoundly impact their biogenesis and protein processing.

The protein resides in the cell membrane. It localises to the synapse. In terms of biological role, promotes neurite outgrowth and especially branching of neuritic processes in primary hippocampal and cortical cells. The sequence is that of Neuritin (NRN1) from Homo sapiens (Human).